A 217-amino-acid polypeptide reads, in one-letter code: ATP phosphoribosyltransferase (217 aa).

Belongs to the ATP phosphoribosyltransferase family. Short subfamily. As to quaternary structure, heteromultimer composed of HisG and HisZ subunits.

Its subcellular location is the cytoplasm. It carries out the reaction 1-(5-phospho-beta-D-ribosyl)-ATP + diphosphate = 5-phospho-alpha-D-ribose 1-diphosphate + ATP. It participates in amino-acid biosynthesis; L-histidine biosynthesis; L-histidine from 5-phospho-alpha-D-ribose 1-diphosphate: step 1/9. Its function is as follows. Catalyzes the condensation of ATP and 5-phosphoribose 1-diphosphate to form N'-(5'-phosphoribosyl)-ATP (PR-ATP). Has a crucial role in the pathway because the rate of histidine biosynthesis seems to be controlled primarily by regulation of HisG enzymatic activity. The chain is ATP phosphoribosyltransferase from Synechococcus sp. (strain WH7803).